Consider the following 607-residue polypeptide: Methylmalonate-semialdehyde dehydrogenase [acylating], mitochondrial (607 aa).

The disordered stretch occupies residues 1-69 (MVRVKQKNLE…KLRSSSSTTT (69 aa)). The N-terminal 98 residues, 1–98 (MVRVKQKNLE…QFLALRSSWL (98 aa)), are a transit peptide targeting the mitochondrion. Residues 9–30 (LESYRSNGTYPPTWRNPTTSFA) are compositionally biased toward polar residues. A compositionally biased stretch (basic residues) spans 42 to 51 (LKSKTKRRRL). Residues phenylalanine 259, lysine 283, glutamate 286, lysine 287, and serine 336 each coordinate NAD(+). Cysteine 391 acts as the Nucleophile in catalysis. Glutamate 491 provides a ligand contact to NAD(+).

It belongs to the aldehyde dehydrogenase family.

Its subcellular location is the mitochondrion. It carries out the reaction 2-methyl-3-oxopropanoate + NAD(+) + CoA + H2O = propanoyl-CoA + hydrogencarbonate + NADH + H(+). The chain is Methylmalonate-semialdehyde dehydrogenase [acylating], mitochondrial (ALDH6B2) from Arabidopsis thaliana (Mouse-ear cress).